The following is a 355-amino-acid chain: Aromatic amino acid aminotransferase (355 aa).

Lysine 217 bears the N6-(pyridoxal phosphate)lysine mark.

Belongs to the class-II pyridoxal-phosphate-dependent aminotransferase family. Homodimer. Pyridoxal 5'-phosphate is required as a cofactor.

It carries out the reaction an aromatic L-alpha-amino acid + 2-oxoglutarate = an aromatic oxo-acid + L-glutamate. Its function is as follows. Aminotransferase that catalyzes the conversion of aromatic amino acids and 2-oxoglutarate into corresponding aromatic oxo acids and L-glutamate. This chain is Aromatic amino acid aminotransferase, found in Mycobacterium avium (strain 104).